We begin with the raw amino-acid sequence, 265 residues long: ClpXP adapter protein SpxH (265 aa).

The protein belongs to the SpxH family. In terms of assembly, interacts with Spx.

It localises to the cytoplasm. In terms of biological role, adapter protein required for efficient degradation of Spx by ClpXP under non-stress conditions. Interaction with Spx stabilizes Spx and exposes the C-terminus of Spx for recognition and proteolysis by ClpXP. The sequence is that of ClpXP adapter protein SpxH from Staphylococcus epidermidis (strain ATCC 35984 / DSM 28319 / BCRC 17069 / CCUG 31568 / BM 3577 / RP62A).